The primary structure comprises 321 residues: ATP-dependent 6-phosphofructokinase (321 aa).

Gly12 is an ATP binding site. ADP is bound by residues 22 to 26 and 55 to 60; these read RGVVR and RYSVSD. Residues 73 to 74 and 103 to 106 each bind ATP; these read RF and GDGS. Asp104 serves as a coordination point for Mg(2+). 127–129 is a binding site for substrate; it reads TID. Asp129 acts as the Proton acceptor in catalysis. Position 156 (Arg156) interacts with ADP. Residues Arg164 and 171–173 contribute to the substrate site; that span reads MGR. Residues 187–189, Arg213, and 215–217 contribute to the ADP site; these read GCE and KRH. Residues Glu224, Arg245, and 251–254 contribute to the substrate site; that span reads HIQR.

This sequence belongs to the phosphofructokinase type A (PFKA) family. ATP-dependent PFK group I subfamily. Prokaryotic clade 'B1' sub-subfamily. Homotetramer. Mg(2+) serves as cofactor.

The protein resides in the cytoplasm. The enzyme catalyses beta-D-fructose 6-phosphate + ATP = beta-D-fructose 1,6-bisphosphate + ADP + H(+). It functions in the pathway carbohydrate degradation; glycolysis; D-glyceraldehyde 3-phosphate and glycerone phosphate from D-glucose: step 3/4. Allosterically activated by ADP and other diphosphonucleosides, and allosterically inhibited by phosphoenolpyruvate. Functionally, catalyzes the phosphorylation of D-fructose 6-phosphate to fructose 1,6-bisphosphate by ATP, the first committing step of glycolysis. The sequence is that of ATP-dependent 6-phosphofructokinase from Haemophilus influenzae (strain 86-028NP).